The following is a 1072-amino-acid chain: Carbamoyl phosphate synthase large chain (1072 aa).

Residues 1-401 (MPKRLDINTI…SLLKAVRSLE (401 aa)) form a carboxyphosphate synthetic domain region. 12 residues coordinate ATP: R129, R169, G175, G176, K208, I210, E215, G241, V242, H243, Q284, and E298. Residues 133-327 (RTLMQELNEP…IAKLAAKIAV (195 aa)) enclose the ATP-grasp 1 domain. Mg(2+)-binding residues include Q284, E298, and N300. Mn(2+)-binding residues include Q284, E298, and N300. Residues 402 to 546 (LGIYHLELNH…YSTYGDENES (145 aa)) are oligomerization domain. The segment at 547-929 (IVTERKSVMV…ALYKGLVAAG (383 aa)) is carbamoyl phosphate synthetic domain. Positions 671 to 861 (EAALTELGIP…MANIATKVIL (191 aa)) constitute an ATP-grasp 2 domain. ATP contacts are provided by R707, R746, E752, G777, V778, H779, S780, Q820, and E832. Residues Q820, E832, and N834 each coordinate Mg(2+). Positions 820, 832, and 834 each coordinate Mn(2+). The 143-residue stretch at 930–1072 (ISIPTHGSVI…PTTRHEVVHA (143 aa)) folds into the MGS-like domain. Residues 930-1072 (ISIPTHGSVI…PTTRHEVVHA (143 aa)) form an allosteric domain region.

The protein belongs to the CarB family. As to quaternary structure, composed of two chains; the small (or glutamine) chain promotes the hydrolysis of glutamine to ammonia, which is used by the large (or ammonia) chain to synthesize carbamoyl phosphate. Tetramer of heterodimers (alpha,beta)4. Mg(2+) is required as a cofactor. It depends on Mn(2+) as a cofactor.

The catalysed reaction is hydrogencarbonate + L-glutamine + 2 ATP + H2O = carbamoyl phosphate + L-glutamate + 2 ADP + phosphate + 2 H(+). The enzyme catalyses hydrogencarbonate + NH4(+) + 2 ATP = carbamoyl phosphate + 2 ADP + phosphate + 2 H(+). It functions in the pathway amino-acid biosynthesis; L-arginine biosynthesis; carbamoyl phosphate from bicarbonate: step 1/1. The protein operates within pyrimidine metabolism; UMP biosynthesis via de novo pathway; (S)-dihydroorotate from bicarbonate: step 1/3. Its function is as follows. Large subunit of the glutamine-dependent carbamoyl phosphate synthetase (CPSase). CPSase catalyzes the formation of carbamoyl phosphate from the ammonia moiety of glutamine, carbonate, and phosphate donated by ATP, constituting the first step of 2 biosynthetic pathways, one leading to arginine and/or urea and the other to pyrimidine nucleotides. The large subunit (synthetase) binds the substrates ammonia (free or transferred from glutamine from the small subunit), hydrogencarbonate and ATP and carries out an ATP-coupled ligase reaction, activating hydrogencarbonate by forming carboxy phosphate which reacts with ammonia to form carbamoyl phosphate. The chain is Carbamoyl phosphate synthase large chain from Bacillus cytotoxicus (strain DSM 22905 / CIP 110041 / 391-98 / NVH 391-98).